The primary structure comprises 362 residues: Biotin synthase (362 aa).

The tract at residues 14–39 is disordered; sequence AQRTPEPLPPTSQGLARPSHDVVRGP. A Radical SAM core domain is found at 87-316; sequence HKGGPAALCG…ARDILVCGGR (230 aa). [4Fe-4S] cluster contacts are provided by Cys-105, Cys-109, and Cys-112. [2Fe-2S] cluster-binding residues include Cys-181 and Cys-241.

The protein belongs to the radical SAM superfamily. Biotin synthase family. In terms of assembly, homodimer. Requires [4Fe-4S] cluster as cofactor. It depends on [2Fe-2S] cluster as a cofactor.

It catalyses the reaction (4R,5S)-dethiobiotin + (sulfur carrier)-SH + 2 reduced [2Fe-2S]-[ferredoxin] + 2 S-adenosyl-L-methionine = (sulfur carrier)-H + biotin + 2 5'-deoxyadenosine + 2 L-methionine + 2 oxidized [2Fe-2S]-[ferredoxin]. It participates in cofactor biosynthesis; biotin biosynthesis; biotin from 7,8-diaminononanoate: step 2/2. Functionally, catalyzes the conversion of dethiobiotin (DTB) to biotin by the insertion of a sulfur atom into dethiobiotin via a radical-based mechanism. This chain is Biotin synthase, found in Nitratidesulfovibrio vulgaris (strain ATCC 29579 / DSM 644 / CCUG 34227 / NCIMB 8303 / VKM B-1760 / Hildenborough) (Desulfovibrio vulgaris).